The sequence spans 216 residues: MATKLTERQQEILDLIRQTVARTGFPPTRAEIAQALGFRSPNAAEDHLKALARKGAIELTAGASRGIRLKVPDSATPSAQLTHPLLAQLVLPLVGRVAAGSPILASEHVEREVGVDPGLFAQTPDYLLKVRGMSMRDAGILEGDLLAVKRAAEARNGQIVVARLGDEVTVKRLQRQNGRIELLPENPDFAPIVVANTDEFALEGIAVGLIRTQPLH.

A DNA-binding region (H-T-H motif) is located at residues 29–49 (RAEIAQALGFRSPNAAEDHLK). Catalysis depends on for autocatalytic cleavage activity residues serine 134 and lysine 171.

The protein belongs to the peptidase S24 family. As to quaternary structure, homodimer.

The catalysed reaction is Hydrolysis of Ala-|-Gly bond in repressor LexA.. In terms of biological role, represses a number of genes involved in the response to DNA damage (SOS response), including recA and lexA. In the presence of single-stranded DNA, RecA interacts with LexA causing an autocatalytic cleavage which disrupts the DNA-binding part of LexA, leading to derepression of the SOS regulon and eventually DNA repair. In Bordetella bronchiseptica (strain ATCC BAA-588 / NCTC 13252 / RB50) (Alcaligenes bronchisepticus), this protein is LexA repressor.